We begin with the raw amino-acid sequence, 216 residues long: MQIDISTLDAGSAGKAELPEEYFAATPRADIMARVVHWQLAKRRAGTHKVKGMGEVSGTTKKPYRQKGTGNARQGSLRAPQFRTGGAVHGPVVRDHGYSLNKKVRRLGLISALSQKLAEGKLVVLDTVAGVSKTSELNVKLKKLGWGRTLVVDAVVDEGFARASRNLIGIDVLPVVGANVYDILQHDTLAITAAGLEGLKRRLDGIKAGANEEIAA.

Positions 47–77 (THKVKGMGEVSGTTKKPYRQKGTGNARQGSL) are disordered.

This sequence belongs to the universal ribosomal protein uL4 family. In terms of assembly, part of the 50S ribosomal subunit.

One of the primary rRNA binding proteins, this protein initially binds near the 5'-end of the 23S rRNA. It is important during the early stages of 50S assembly. It makes multiple contacts with different domains of the 23S rRNA in the assembled 50S subunit and ribosome. Its function is as follows. Forms part of the polypeptide exit tunnel. This Acidiphilium cryptum (strain JF-5) protein is Large ribosomal subunit protein uL4.